A 190-amino-acid chain; its full sequence is Protein shisa-like-2A (190 aa).

The next 2 helical transmembrane spans lie at 48 to 68 (SFFP…LIGL) and 70 to 90 (VAAV…YLFI).

This sequence belongs to the shisa family.

Its subcellular location is the membrane. In Homo sapiens (Human), this protein is Protein shisa-like-2A.